A 143-amino-acid chain; its full sequence is Cytotoxic L-amino-acid oxidase (143 aa).

Belongs to the flavin monoamine oxidase family. FAD is required as a cofactor.

It carries out the reaction an L-alpha-amino acid + O2 + H2O = a 2-oxocarboxylate + H2O2 + NH4(+). Its function is as follows. Cytotoxic L-amino acid oxidase with high oxidase activity towards DL-methionine and L-methionine, L-phenylalanine, DL-norleucine, L-isoleucine, L-arginine, L-tyrosine, and DL-leucine. Shows relatively low activity towards DL-lysine and L-lysine, DL-asparagine, DL-valine, L-histidine, DL-threonine, DL-tryptophan, and L-glutamic acid; and no activity towards L-cysteine, L-glycine, L-proline, L-oxyproline, DL-serine, and DL-aspartic acid. Does not use benzylamine, ethanolamine, diethylamine, meta- and para-phenylendiamine, ortho-, meta- and para-aminophenols, or putrescin as a substrate. Acts as a toxin by inducing chromatin condensation, as well as DNA and nucleus fragmentation, which are typical for apoptosis. Probably induces cell damage indirectly via the generation of free radicals and oxidant agents that can trigger cell impairment and apoptosis by a caspase-independent pathway. The polypeptide is Cytotoxic L-amino-acid oxidase (Amanita phalloides (Death cap)).